Here is a 644-residue protein sequence, read N- to C-terminus: Acetyl-coenzyme A synthetase (644 aa).

CoA contacts are provided by residues 189-192 (RGGK) and threonine 307. ATP-binding positions include 383–385 (GEP), 407–412 (DTWWQT), aspartate 496, and arginine 511. Residue serine 519 coordinates CoA. An ATP-binding site is contributed by arginine 522. Residues valine 533, histidine 535, and valine 538 each contribute to the Mg(2+) site. Arginine 580 is a binding site for CoA. Lysine 605 carries the post-translational modification N6-acetyllysine.

It belongs to the ATP-dependent AMP-binding enzyme family. Mg(2+) serves as cofactor. Post-translationally, acetylated. Deacetylation by the SIR2-homolog deacetylase activates the enzyme.

The catalysed reaction is acetate + ATP + CoA = acetyl-CoA + AMP + diphosphate. In terms of biological role, catalyzes the conversion of acetate into acetyl-CoA (AcCoA), an essential intermediate at the junction of anabolic and catabolic pathways. AcsA undergoes a two-step reaction. In the first half reaction, AcsA combines acetate with ATP to form acetyl-adenylate (AcAMP) intermediate. In the second half reaction, it can then transfer the acetyl group from AcAMP to the sulfhydryl group of CoA, forming the product AcCoA. The sequence is that of Acetyl-coenzyme A synthetase from Rubrobacter xylanophilus (strain DSM 9941 / JCM 11954 / NBRC 16129 / PRD-1).